Consider the following 692-residue polypeptide: Proprotein convertase subtilisin/kexin type 9 (692 aa).

The N-terminal stretch at 1 to 30 is a signal peptide; sequence MGTVSSRRSWWPLPLPLLLLLLLGLAGARA. Residues 31-152 constitute a propeptide that is removed on maturation; sequence QEDEDGDYEE…IEEDSSVFAQ (122 aa). Tyrosine 38 carries the sulfotyrosine modification. Serine 47 is subject to Phosphoserine. One can recognise an Inhibitor I9 domain in the interval 77–149; it reads TYVVVLKEET…VDYIEEDSSV (73 aa). The Peptidase S8 domain maps to 155 to 444; it reads PWNLERITPA…VLTPNLVAAL (290 aa). Catalysis depends on charge relay system residues aspartate 186 and histidine 226. 2 disulfide bridges follow: cysteine 223-cysteine 255 and cysteine 323-cysteine 358. Serine 386 (charge relay system) is an active-site residue. Positions 450–692 are C-terminal domain; it reads RAGWQLFCRT…HLVQASQELQ (243 aa). 3 disulfide bridges follow: cysteine 457-cysteine 527, cysteine 477-cysteine 526, and cysteine 486-cysteine 509. The N-linked (GlcNAc...) asparagine glycan is linked to asparagine 533. Disulfide bonds link cysteine 534/cysteine 601, cysteine 552/cysteine 600, cysteine 562/cysteine 588, cysteine 608/cysteine 679, cysteine 626/cysteine 678, and cysteine 635/cysteine 654. Serine 688 carries the phosphoserine modification.

This sequence belongs to the peptidase S8 family. As to quaternary structure, monomer. Can self-associate to form dimers and higher multimers which may have increased LDLR degrading activity. The precursor protein but not the mature protein may form multimers. Interacts with APOB, VLDLR, LRP8/APOER2 and BACE1. The full-length immature form (pro-PCSK9) interacts with SCNN1A, SCNN1B and SCNN1G. The pro-PCSK9 form (via C-terminal domain) interacts with LDLR. Interacts (via the C-terminal domain) with ANXA2 (via repeat Annexin 1); the interaction inhibits the degradation of LDLR. The cofactor is Ca(2+). Cleavage by furin and PCSK5 generates a truncated inactive protein that is unable to induce LDLR degradation. In terms of processing, undergoes autocatalytic cleavage in the endoplasmic reticulum to release the propeptide from the N-terminus and the cleavage of the propeptide is strictly required for its maturation and activation. The cleaved propeptide however remains associated with the catalytic domain through non-covalent interactions, preventing potential substrates from accessing its active site. As a result, it is secreted from cells as a propeptide-containing, enzymatically inactive protein. Post-translationally, phosphorylation protects the propeptide against proteolysis.

Its subcellular location is the cytoplasm. It localises to the secreted. The protein resides in the endosome. The protein localises to the lysosome. It is found in the cell surface. Its subcellular location is the endoplasmic reticulum. It localises to the golgi apparatus. Its activity is regulated as follows. Its proteolytic activity is autoinhibited by the non-covalent binding of the propeptide to the catalytic domain. Inhibited by EGTA. Crucial player in the regulation of plasma cholesterol homeostasis. Binds to low-density lipid receptor family members: low density lipoprotein receptor (LDLR), very low density lipoprotein receptor (VLDLR), apolipoprotein E receptor (LRP1/APOER) and apolipoprotein receptor 2 (LRP8/APOER2), and promotes their degradation in intracellular acidic compartments. Acts via a non-proteolytic mechanism to enhance the degradation of the hepatic LDLR through a clathrin LDLRAP1/ARH-mediated pathway. May prevent the recycling of LDLR from endosomes to the cell surface or direct it to lysosomes for degradation. Can induce ubiquitination of LDLR leading to its subsequent degradation. Inhibits intracellular degradation of APOB via the autophagosome/lysosome pathway in a LDLR-independent manner. Involved in the disposal of non-acetylated intermediates of BACE1 in the early secretory pathway. Inhibits epithelial Na(+) channel (ENaC)-mediated Na(+) absorption by reducing ENaC surface expression primarily by increasing its proteasomal degradation. Regulates neuronal apoptosis via modulation of LRP8/APOER2 levels and related anti-apoptotic signaling pathways. In Colobus guereza (Mantled guereza), this protein is Proprotein convertase subtilisin/kexin type 9 (PCSK9).